Here is a 268-residue protein sequence, read N- to C-terminus: Imidazole glycerol phosphate synthase subunit HisF (268 aa).

Residues D12 and D131 contribute to the active site.

It belongs to the HisA/HisF family. In terms of assembly, heterodimer of HisH and HisF.

It is found in the cytoplasm. It carries out the reaction 5-[(5-phospho-1-deoxy-D-ribulos-1-ylimino)methylamino]-1-(5-phospho-beta-D-ribosyl)imidazole-4-carboxamide + L-glutamine = D-erythro-1-(imidazol-4-yl)glycerol 3-phosphate + 5-amino-1-(5-phospho-beta-D-ribosyl)imidazole-4-carboxamide + L-glutamate + H(+). It functions in the pathway amino-acid biosynthesis; L-histidine biosynthesis; L-histidine from 5-phospho-alpha-D-ribose 1-diphosphate: step 5/9. In terms of biological role, IGPS catalyzes the conversion of PRFAR and glutamine to IGP, AICAR and glutamate. The HisF subunit catalyzes the cyclization activity that produces IGP and AICAR from PRFAR using the ammonia provided by the HisH subunit. This Methanoculleus marisnigri (strain ATCC 35101 / DSM 1498 / JR1) protein is Imidazole glycerol phosphate synthase subunit HisF.